Here is a 397-residue protein sequence, read N- to C-terminus: L-aspartate--L-methionine ligase (397 aa).

The ATP-grasp domain occupies 131–347 (VALNNKARIP…FFNTILKYVK (217 aa)). ADP-binding residues include Lys-136, Val-171, Lys-173, Gly-183, Val-186, Ile-188, Glu-215, Gln-216, Ile-218, Asn-223, and Thr-246. Asp-288 serves as a coordination point for Mg(2+). The ADP site is built by Leu-290 and Ile-300. Asp-301 contacts Mg(2+). The active-site Critical for catalysis is the Arg-305.

Primarily a monomer in solution. Minor homodimer formation. Mg(2+) serves as cofactor.

The enzyme catalyses L-aspartate + L-methionine + ATP = L-aspartyl-L-methionine + ADP + phosphate + H(+). It functions in the pathway amino-acid metabolism. In terms of biological role, L-amino acid ligase, which preferentially catalyzes the formation of L-aspartyl-L-methionine dipeptide from L-aspartate and L-methionine in the presence of ATP. Less active with L-asparagine and L-methionine as substrates. Less active with L-aspartate and either L-phenylalanine, L-valine, L-leucine or L-isoleucine as substrates. Decreased activity when L-methionine is substituted with seleno-DL-methionine, L-homocysteine, L-methionine sulfoxide, L-methionine sulfoximine and o-acetyl-L-serine. Decreased activity with acetylation of L-methionine amino group. Decreased activity by modification of L-methionine carboxylate to L-methionine methyl ester. No activity when L-methionine is substituted with L-homoserine. No activity with formylation of L-methionine amino group. No activity by modification of L-methionine carboxylate to L-methionine-glycine carboxylate. No activity when L-aspartate substrate is replaced by analogs such as L-homoserine, DL-aspartate beta-methyl ester, L-glutamate or o-acetyl-L-serine. No activity when L-aspartate amino and alpha-carboxylate groups are modified to L-malate, glycine-L-aspartate, L-aspartate-glycine or N-carbamoyl-DL-aspartate. No activity with L-methionine or L-aspartate as sole substrates. No activity in presence of other nucleoside triphosphates including GTP, CTP, UTP, TTP or ITP. Involved in sulfur amino acid metabolism. This is L-aspartate--L-methionine ligase from Staphylococcus aureus (strain NCTC 8325 / PS 47).